We begin with the raw amino-acid sequence, 305 residues long: RxLR effector protein PexRD25 (305 aa).

The signal sequence occupies residues 1–16; it reads MRFLFYMLLACSAVVA. Positions 44-56 match the RxLR-dEER motif; it reads RLLRDRRSVDEER.

Belongs to the RxLR effector family.

The protein localises to the secreted. It localises to the host nucleus. It is found in the host nucleolus. Effector that enhances P.infestans colonization of Nicotiana benthamiana leaves. The polypeptide is RxLR effector protein PexRD25 (Phytophthora infestans (strain T30-4) (Potato late blight agent)).